We begin with the raw amino-acid sequence, 161 residues long: Small ribosomal subunit protein uS9 (161 aa).

This sequence belongs to the universal ribosomal protein uS9 family.

This chain is Small ribosomal subunit protein uS9, found in Methylobacterium radiotolerans (strain ATCC 27329 / DSM 1819 / JCM 2831 / NBRC 15690 / NCIMB 10815 / 0-1).